A 745-amino-acid polypeptide reads, in one-letter code: Polyribonucleotide nucleotidyltransferase (745 aa).

Residues Asp-487 and Asp-493 each contribute to the Mg(2+) site. One can recognise a KH domain in the interval 554-613; the sequence is PSSTTVKIDKDKIKDIIGPGGKIIKEICETSNAKIDISDDGTVSIYASDRDKIKIALDKI. Residues 623–691 enclose the S1 motif domain; it reads GEIFNGTVMK…NKGKAKLTIK (69 aa). Residues 693-732 form a disordered region; it reads AYKDHSSNNTKQKNNVKDDSESEQRRDTSKKRTWNEDNNT. The segment covering 707–719 has biased composition (basic and acidic residues); it reads NVKDDSESEQRRD.

This sequence belongs to the polyribonucleotide nucleotidyltransferase family. Mg(2+) is required as a cofactor.

The protein resides in the cytoplasm. The catalysed reaction is RNA(n+1) + phosphate = RNA(n) + a ribonucleoside 5'-diphosphate. Involved in mRNA degradation. Catalyzes the phosphorolysis of single-stranded polyribonucleotides processively in the 3'- to 5'-direction. This is Polyribonucleotide nucleotidyltransferase from Rickettsia prowazekii (strain Madrid E).